The sequence spans 937 residues: Translation initiation factor IF-2 (937 aa).

Disordered stretches follow at residues 157–230 and 250–346; these read KEAQ…AARK and IKAP…ESNF. Over residues 173-205 the composition is skewed to basic and acidic residues; that stretch reads EAQKADAAKPVEAKADESAQEEKKRVAAEESKK. The span at 252–265 shows a compositional bias: low complexity; the sequence is APEPAAPVAAKPAE. Positions 267–293 are enriched in basic and acidic residues; the sequence is TLHKPADKKAGEKKDEKKPAVTADKKS. Residues 295-304 show a composition bias toward polar residues; sequence KSANVSSTWQ. Positions 437-606 constitute a tr-type G domain; sequence PRAPVVTVMG…LLQAEVLELK (170 aa). Residues 446-453 form a G1 region; the sequence is GHVDHGKT. 446–453 provides a ligand contact to GTP; sequence GHVDHGKT. A G2 region spans residues 471–475; it reads GITQH. The interval 492–495 is G3; that stretch reads DTPG. GTP-binding positions include 492 to 496 and 546 to 549; these read DTPGH and NKID. The segment at 546-549 is G4; it reads NKID. The interval 582-584 is G5; the sequence is SAK.

It belongs to the TRAFAC class translation factor GTPase superfamily. Classic translation factor GTPase family. IF-2 subfamily.

It localises to the cytoplasm. Functionally, one of the essential components for the initiation of protein synthesis. Protects formylmethionyl-tRNA from spontaneous hydrolysis and promotes its binding to the 30S ribosomal subunits. Also involved in the hydrolysis of GTP during the formation of the 70S ribosomal complex. The polypeptide is Translation initiation factor IF-2 (Janthinobacterium sp. (strain Marseille) (Minibacterium massiliensis)).